The following is a 339-amino-acid chain: Dihydroorotate dehydrogenase (quinone) (339 aa).

Residues alanine 62–lysine 66 and threonine 86 each bind FMN. Lysine 66 contributes to the substrate binding site. Asparagine 111–phenylalanine 115 is a substrate binding site. FMN is bound by residues asparagine 139 and asparagine 172. Asparagine 172 serves as a coordination point for substrate. Residue serine 175 is the Nucleophile of the active site. Position 177 (asparagine 177) interacts with substrate. FMN contacts are provided by lysine 217 and threonine 245. Asparagine 246–threonine 247 contacts substrate. Residues glycine 268, glycine 297, and tyrosine 318–serine 319 contribute to the FMN site.

Belongs to the dihydroorotate dehydrogenase family. Type 2 subfamily. In terms of assembly, monomer. FMN is required as a cofactor.

It localises to the cell membrane. The catalysed reaction is (S)-dihydroorotate + a quinone = orotate + a quinol. The protein operates within pyrimidine metabolism; UMP biosynthesis via de novo pathway; orotate from (S)-dihydroorotate (quinone route): step 1/1. In terms of biological role, catalyzes the conversion of dihydroorotate to orotate with quinone as electron acceptor. In Shewanella oneidensis (strain ATCC 700550 / JCM 31522 / CIP 106686 / LMG 19005 / NCIMB 14063 / MR-1), this protein is Dihydroorotate dehydrogenase (quinone).